A 403-amino-acid polypeptide reads, in one-letter code: Arginine deiminase (403 aa).

Residue C388 is the Amidino-cysteine intermediate of the active site.

This sequence belongs to the arginine deiminase family.

It localises to the cytoplasm. It carries out the reaction L-arginine + H2O = L-citrulline + NH4(+). It participates in amino-acid degradation; L-arginine degradation via ADI pathway; carbamoyl phosphate from L-arginine: step 1/2. The sequence is that of Arginine deiminase from Mycoplasma capricolum subsp. capricolum (strain California kid / ATCC 27343 / NCTC 10154).